The chain runs to 173 residues: Transcription factor S-II-related protein (173 aa).

One can recognise a TFIIS central domain in the interval 9–129; sequence ISDKEREIVI…EETLNQMATV (121 aa). The segment at 130 to 170 adopts a TFIIS-type zinc-finger fold; that stretch reads EWKPCYACKNTSYHFYQLQTRSADEPMTTFYICKNCMKTYK. Residues Cys134, Cys137, Cys162, and Cys165 each contribute to the Zn(2+) site.

It belongs to the TFS-II family.

In Acanthamoeba polyphaga mimivirus (APMV), this protein is Transcription factor S-II-related protein.